A 366-amino-acid polypeptide reads, in one-letter code: Subtilisin-like protease het-Q2 (366 aa).

Positions 1-321 (MSAISHHSLS…RVLMALGEKT (321 aa)) constitute a Peptidase S8 domain. Catalysis depends on Asp-35, which acts as the Charge relay system. The interval 79-98 (DFCQPSPPGDRQGPPPQPHS) is disordered. Pro residues predominate over residues 83-96 (PSPPGDRQGPPPQP). Catalysis depends on charge relay system residues His-105 and Ser-266. A helical transmembrane segment spans residues 261–283 (LVSGSSFATPVVVSVAALVLAFV).

The protein belongs to the peptidase S8 family.

It is found in the membrane. Functionally, serine protease involved in heterokaryon incompatibility, a process that ensures that during spontaneous vegetative cell fusion, only compatible cells from the same colony survive (non-self-recognition). In P.anserina, the het-q locus exists as 2 incompatible alleles, het-Q1 (AC B2AXJ5) and het-Q2 (this entry). Prevents cell fusion with strains containing the gasdermin-like protein het-Q1 by mediating proteolytic cleavage and maturation of het-Q1 during the allorecognition process, thereby triggering cell death. This chain is Subtilisin-like protease het-Q2, found in Podospora anserina (Pleurage anserina).